Here is a 202-residue protein sequence, read N- to C-terminus: Putative 3-methyladenine DNA glycosylase (202 aa).

This sequence belongs to the DNA glycosylase MPG family.

This is Putative 3-methyladenine DNA glycosylase from Staphylococcus aureus (strain Mu3 / ATCC 700698).